Consider the following 190-residue polypeptide: MKLLLLCLGLILVHAHEEENDVVKGNFDISKISGDWYSILLASDIKEKIEENGSMRVFVKDIEVLSNSSLIFTMHTKVNGKCTKISLICNKTEKDGEYDVVHDGYNLFRIIETAYEDYIIFHLNNVNQEQEFQLMELYGRKPDVSPKVKEKFVRYCQGMEIPKENILDLTQVDRCLQARQSEAAQVSSAE.

The first 15 residues, 1 to 15 (MKLLLLCLGLILVHA), serve as a signal peptide directing secretion. Residues 43–54 (SDIKEKIEENGS) are igE-binding. 2 N-linked (GlcNAc...) asparagine glycosylation sites follow: N52 and N67. The igE-binding stretch occupies residues 76–83 (TKVNGKCT). Cysteines 82 and 175 form a disulfide. N90 carries an N-linked (GlcNAc...) asparagine glycan. The segment at 91–97 (KTEKDGE) is igE-binding. A no IgE-binding region spans residues 100–109 (VVHDGYNLFR). IgE-binding regions lie at residues 125-132 (NVNQEQEF) and 139-152 (GRKP…KEKF).

It belongs to the calycin superfamily. Lipocalin family. As to quaternary structure, monomer. As to expression, expressed in saliva (at protein level). Expressed in dander (at protein level). According to PubMed:22104604, expressed in submaxillary gland. In contrast, according to PubMed:22515174, not expressed in submaxillary gland. Expressed in bladder and skin, but not in tongue.

It localises to the secreted. The polypeptide is Lipocalin Can f 6.0101 (Canis lupus familiaris (Dog)).